The chain runs to 173 residues: MKANTMFIILCLSLSTLCVSSQSTSVHGKIFVPNRAVKLSSDGNYPFDLSKEDGAQPYFMTPRLRFYPIGKRAAGEMEQSEGQNPETKSHSWRKRSVLTPSLSSLGESLESGISKRISINQDLKAITDMLLTEQIQARRRCLDALRQRLLDLGKRDSDVSLFNGDLLPNGRCS.

The N-terminal stretch at 1–21 is a signal peptide; it reads MKANTMFIILCLSLSTLCVSS. Residues 22–34 constitute a propeptide that is removed on maturation; it reads QSTSVHGKIFVPN. Position 69 is an isoleucine amide (I69). A propeptide spanning residues 73-114 is cleaved from the precursor; the sequence is AAGEMEQSEGQNPETKSHSWRKRSVLTPSLSSLGESLESGIS. The segment at 75–94 is disordered; that stretch reads GEMEQSEGQNPETKSHSWRK. C141 and C172 form a disulfide bridge. Position 152 is a leucine amide (L152).

The protein belongs to the molluscan ELH family. In terms of assembly, califin A consists of a 36-residue large subunit bound by a single disulfide bond to a 18-residue small subunit.

It localises to the secreted. Functionally, the atrial gland peptide A and peptide B precursors are the source of the 2 peptides that, upon release from this reproductive system gland, initiate the egg-laying process by exciting the bag cell neurons. These neurons, clustered in neural connectives near the abdominal ganglion, in turn release other peptides that act directly on the ganglion and also, via the circulating hemolymph, on many other organs to control the physiological processes of egg-laying. One of these other peptides is the egg-laying hormone. In terms of biological role, injected in sexually mature animals califin A excites LB and LC cells of the abdominal ganglion and causes egg-laying. The sequence is that of Atrial gland and califin peptides from Aplysia californica (California sea hare).